The primary structure comprises 249 residues: 5'-nucleotidase SurE (249 aa).

4 residues coordinate a divalent metal cation: Asp8, Asp9, Ser39, and Asn91.

This sequence belongs to the SurE nucleotidase family. The cofactor is a divalent metal cation.

Its subcellular location is the cytoplasm. The enzyme catalyses a ribonucleoside 5'-phosphate + H2O = a ribonucleoside + phosphate. Its function is as follows. Nucleotidase that shows phosphatase activity on nucleoside 5'-monophosphates. The polypeptide is 5'-nucleotidase SurE (Haemophilus influenzae (strain 86-028NP)).